The following is a 183-amino-acid chain: Adenine phosphoribosyltransferase (183 aa).

The protein belongs to the purine/pyrimidine phosphoribosyltransferase family. Homodimer.

It is found in the cytoplasm. It catalyses the reaction AMP + diphosphate = 5-phospho-alpha-D-ribose 1-diphosphate + adenine. Its pathway is purine metabolism; AMP biosynthesis via salvage pathway; AMP from adenine: step 1/1. Functionally, catalyzes a salvage reaction resulting in the formation of AMP, that is energically less costly than de novo synthesis. This is Adenine phosphoribosyltransferase from Sodalis glossinidius (strain morsitans).